A 222-amino-acid chain; its full sequence is Secreted protein D (222 aa).

The first 22 residues, 1–22 (MKIYYLFFVLIYLIYFINLVYC), serve as a signal peptide directing secretion. A glycan (N-linked (GlcNAc...) asparagine) is linked at Asn25.

This sequence belongs to the Sct family.

The protein resides in the secreted. The protein is Secreted protein D of Dictyostelium discoideum (Social amoeba).